A 171-amino-acid polypeptide reads, in one-letter code: I (171 aa).

Disordered regions lie at residues 57-100 (IQYP…LFAQ) and 143-171 (PRTSTPVTEFKRGGGRERLPKARQSKRRA). The segment covering 151–162 (EFKRGGGRERLP) has biased composition (basic and acidic residues).

The protein belongs to the Orthorubulavirus I protein family.

The polypeptide is I (Mumps virus genotype N (strain L-Zagreb vaccine) (MuV)).